A 546-amino-acid chain; its full sequence is Chaperonin GroEL (546 aa).

ATP-binding positions include 29-32 (TMGP), K50, 86-90 (DGTTT), G414, and D492.

It belongs to the chaperonin (HSP60) family. Forms a cylinder of 14 subunits composed of two heptameric rings stacked back-to-back. Interacts with the co-chaperonin GroES.

The protein resides in the cytoplasm. The enzyme catalyses ATP + H2O + a folded polypeptide = ADP + phosphate + an unfolded polypeptide.. Functionally, together with its co-chaperonin GroES, plays an essential role in assisting protein folding. The GroEL-GroES system forms a nano-cage that allows encapsulation of the non-native substrate proteins and provides a physical environment optimized to promote and accelerate protein folding. The sequence is that of Chaperonin GroEL from Helicobacter pylori (strain P12).